We begin with the raw amino-acid sequence, 275 residues long: Large ribosomal subunit protein uL2 (275 aa).

Residues 223-275 are disordered; it reads VAMNPVDHPHGGGEGRTSGGRHPVSPWGQPTKGYKTRSNKRTDKYIVRRRNKK.

The protein belongs to the universal ribosomal protein uL2 family. Part of the 50S ribosomal subunit. Forms a bridge to the 30S subunit in the 70S ribosome.

Its function is as follows. One of the primary rRNA binding proteins. Required for association of the 30S and 50S subunits to form the 70S ribosome, for tRNA binding and peptide bond formation. It has been suggested to have peptidyltransferase activity; this is somewhat controversial. Makes several contacts with the 16S rRNA in the 70S ribosome. The sequence is that of Large ribosomal subunit protein uL2 from Shewanella pealeana (strain ATCC 700345 / ANG-SQ1).